A 719-amino-acid polypeptide reads, in one-letter code: Protein Hook homolog 2 (719 aa).

Residues 1 to 161 (MSVDKAELCG…ELMTKDTPDS (161 aa)) form a required for localization to the centrosome and induction of aggresome formation region. The segment at 1–548 (MSVDKAELCG…LKRKLEEHLQ (548 aa)) is sufficient for interaction with microtubules. In terms of domain architecture, Calponin-homology (CH) spans 6 to 122 (AELCGSLLTW…KLLQLVLGCA (117 aa)). The residue at position 163 (Ser-163) is a Phosphoserine. 2 coiled-coil regions span residues 180–427 (LSEE…AQLQ) and 455–607 (AELR…VDKA). Thr-230 bears the Phosphothreonine mark. Residues 533–719 (DAISILLKRK…SLNLRPTDKH (187 aa)) form a required for localization to the centrosome and induction of aggresome formation region. Residues 584-719 (HNLQKKDADL…SLNLRPTDKH (136 aa)) are sufficient for interaction with CNTRL. Positions 696 to 719 (LATNSRRGPLGRLASLNLRPTDKH) are disordered. The residue at position 710 (Ser-710) is a Phosphoserine.

Belongs to the hook family. In terms of assembly, self-associates. Component of the FTS/Hook/FHIP complex (FHF complex), composed of AKTIP/FTS, FHIP1B, and one or more members of the Hook family of proteins HOOK1, HOOK2, and HOOK3. May interact directly with AKTIP/FTS, HOOK1 and HOOK3. Associates with several subunits of the homotypic vesicular sorting complex (the HOPS complex) including VPS16 and VPS41; these interactions may be indirect. Interacts with CNTRL. Interacts with microtubules. Interacts with ZC3H14. Interacts with LRGUK (via guanylate kinase-like domain). Interacts with CCDC181. Interacts with AP4M1; the interaction is direct, mediates the interaction between FTS-Hook-FHIP (FHF) complex and AP-4 and the perinuclear distribution of AP-4.

The protein resides in the cytoplasm. The protein localises to the cytoskeleton. It localises to the microtubule organizing center. It is found in the centrosome. Its subcellular location is the golgi apparatus. The protein resides in the trans-Golgi network. In terms of biological role, component of the FTS/Hook/FHIP complex (FHF complex). The FHF complex may function to promote vesicle trafficking and/or fusion via the homotypic vesicular protein sorting complex (the HOPS complex). Contributes to the establishment and maintenance of centrosome function. May function in the positioning or formation of aggresomes, which are pericentriolar accumulations of misfolded proteins, proteasomes and chaperones. FHF complex promotes the distribution of AP-4 complex to the perinuclear area of the cell. This Homo sapiens (Human) protein is Protein Hook homolog 2 (HOOK2).